The primary structure comprises 1499 residues: Rho GTPase-activating protein 35 (1499 aa).

The segment at 1–266 (MMMARKQDVR…IPYFEALKQQ (266 aa)) is has GTPase activity, required for proper localization. GTP is bound by residues Lys28, 33–37 (IGKSC), Leu52, Ser56, 95–97 (EQT), 201–203 (KCD), and 229–231 (SAR). FF domains are found at residues 270–327 (IATA…HIHR), 368–422 (KLLE…HLEK), 429–483 (RAEM…HQKQ), and 485–550 (IDRA…HIHF). Tyr308 is modified (phosphotyrosine). A Phosphoserine modification is found at Ser589. In terms of domain architecture, pG1 pseudoGTPase spans 592-767 (DLNIDRINLV…LLDSKRNLNL (176 aa)). A phosphoserine mark is found at Ser770 and Ser773. One can recognise a pG2 pseudoGTPase domain in the interval 783–947 (RIVMCLMCGD…FKDVVEKKNI (165 aa)). A phosphoserine mark is found at Ser970, Ser975, Ser985, and Ser1072. Residue Tyr1087 is modified to Phosphotyrosine. Phosphotyrosine; by ABL2 and PTK6 is present on Tyr1105. Over residues 1124–1141 (KAQSNGSGNGSDSEMDTS) the composition is skewed to polar residues. Positions 1124 to 1148 (KAQSNGSGNGSDSEMDTSSLERGRK) are disordered. Phosphoserine is present on residues Ser1134, Ser1142, Ser1150, Ser1176, Ser1179, and Ser1221. Residues 1177-1207 (VGSDDELGPIRKKEEDQASQGYKGDNAVIPY) are disordered. The segment at 1213–1236 (PRRRNILRSLRRNTKKPKPKPRPS) is required for phospholipid binding and regulation of the substrate preference. Residue Thr1226 is modified to Phosphothreonine. At Ser1236 the chain carries Phosphoserine. The Rho-GAP domain occupies 1249 to 1436 (VPLTTVVTPE…LFIQQCPFFF (188 aa)). The interval 1446–1499 (GAAPGSPSAMAPTVPFLTSTPATSQPSPPQSPPPTPQSPMQPLLSSQLQAEHTL) is disordered. The span at 1448–1470 (APGSPSAMAPTVPFLTSTPATSQ) shows a compositional bias: low complexity. Over residues 1471-1484 (PSPPQSPPPTPQSP) the composition is skewed to pro residues. Residues Ser1472 and Ser1476 each carry the phosphoserine modification. A Phosphothreonine modification is found at Thr1480. Ser1483 carries the post-translational modification Phosphoserine. The segment covering 1485–1499 (MQPLLSSQLQAEHTL) has biased composition (low complexity).

Interacts with the general transcription factor GTF2I, the interaction sequesters GTF2I in the cytoplasm. Interacts with RASA1. Phosphorylation of Tyr-1105 by PTK6 promotes the association with RASA1, inactivating RHOA while activating RAS. Phosphorylation at Tyr-308 by PDGFRA inhibits binding to GTF2I. Phosphorylated by PRKCA at Ser-1221 and Thr-1226, induces relocalization from the cytoplasm to regions of plasma membrane ruffling and prevents the binding and substrate specificity regulation by phospholipids. In brain, phosphorylated by FYN and SRC. During focal adhesion formation, phosphorylated by MAPK1 and MAPK3 at the C-terminal region, probably at Ser-1451, Ser-1476, Thr-1480 and Ser-1483. Phosphorylation by MAPK1 and MAPK3 inhibits GAP function and localizes ARGHAP35 away from newly forming focal adhesions and stress fibers in cells spreading on fibronectin. Phosphorylation at Ser-1476 and Thr-1480 by GSK3B requires priming by MAPK and inhibits RhoGAP activity and modulates polarized cell migration. As to expression, expressed in the developing kidneys. Expressed in all regions of the mature nervous system (at protein level). Detected in neutrophils (at protein level).

It is found in the cytoplasm. The protein resides in the cytoskeleton. Its subcellular location is the cilium basal body. The protein localises to the nucleus. It localises to the cell membrane. Rho GTPase-activating protein (GAP). Binds several acidic phospholipids which inhibits the Rho GAP activity to promote the Rac GAP activity. This binding is inhibited by phosphorylation by PRKCA. Involved in cell differentiation as well as cell adhesion and migration, plays an important role in retinal tissue morphogenesis, neural tube fusion, midline fusion of the cerebral hemispheres and mammary gland branching morphogenesis. Transduces signals from p21-ras to the nucleus, acting via the ras GTPase-activating protein (GAP). Transduces SRC-dependent signals from cell-surface adhesion molecules, such as laminin, to promote neurite outgrowth. Regulates axon outgrowth, guidance and fasciculation. Modulates Rho GTPase-dependent F-actin polymerization, organization and assembly, is involved in polarized cell migration and in the positive regulation of ciliogenesis and cilia elongation. During mammary gland development, is required in both the epithelial and stromal compartments for ductal outgrowth. Represses transcription of the glucocorticoid receptor by binding to the cis-acting regulatory sequence 5'-GAGAAAAGAAACTGGAGAAACTC-3'; this function is however unclear and would need additional experimental evidences. This Mus musculus (Mouse) protein is Rho GTPase-activating protein 35.